Reading from the N-terminus, the 423-residue chain is Imidazolonepropionase (423 aa).

H78 and H80 together coordinate Fe(3+). Zn(2+) contacts are provided by H78 and H80. 4-imidazolone-5-propanoate is bound by residues R87, Y150, and H183. Y150 is an N-formimidoyl-L-glutamate binding site. H247 is a Fe(3+) binding site. H247 is a Zn(2+) binding site. Residue E250 coordinates 4-imidazolone-5-propanoate. Residue D322 coordinates Fe(3+). Residue D322 participates in Zn(2+) binding. 2 residues coordinate N-formimidoyl-L-glutamate: N324 and G326. S327 contributes to the 4-imidazolone-5-propanoate binding site.

The protein belongs to the metallo-dependent hydrolases superfamily. HutI family. Zn(2+) is required as a cofactor. The cofactor is Fe(3+).

The protein resides in the cytoplasm. The catalysed reaction is 4-imidazolone-5-propanoate + H2O = N-formimidoyl-L-glutamate. It participates in amino-acid degradation; L-histidine degradation into L-glutamate; N-formimidoyl-L-glutamate from L-histidine: step 3/3. Functionally, catalyzes the hydrolytic cleavage of the carbon-nitrogen bond in imidazolone-5-propanoate to yield N-formimidoyl-L-glutamate. It is the third step in the universal histidine degradation pathway. The protein is Imidazolonepropionase of Bacillus mycoides (strain KBAB4) (Bacillus weihenstephanensis).